Consider the following 175-residue polypeptide: Putative FAS1 domain-containing protein 081L (175 aa).

The FAS1 domain maps to 28-172; the sequence is GPIVPSVWTI…GLVHIVDQFP (145 aa).

This Invertebrate iridescent virus 3 (IIV-3) protein is Putative FAS1 domain-containing protein 081L.